A 290-amino-acid polypeptide reads, in one-letter code: Sodium/potassium-transporting ATPase subunit beta-2 (290 aa).

The Cytoplasmic portion of the chain corresponds to 1–39 (MVIQKEKKSCGQVVEEWKEFVWNPRTHQFMGRTGTSWAF). Residues 40–67 (ILLFYLVFYGFLTAMFTLTMWVMLQTVS) form a helical; Signal-anchor for type II membrane protein membrane-spanning segment. Topologically, residues 68 to 290 (DHTPKYQDRL…VAFKLRINKT (223 aa)) are extracellular. Residues N96 and N118 are each glycosylated (N-linked (GlcNAc...) asparagine). An intrachain disulfide couples C129 to C150. Residues N153 and N159 are each glycosylated (N-linked (GlcNAc...) asparagine). C160 and C177 form a disulfide bridge. N-linked (GlcNAc...) asparagine glycans are attached at residues N193, N197, and N238. The immunoglobulin-like stretch occupies residues 193–290 (NQSMNVTCAG…VAFKLRINKT (98 aa)). C200 and C261 are oxidised to a cystine.

Belongs to the X(+)/potassium ATPases subunit beta family. As to quaternary structure, the sodium/potassium-transporting ATPase is composed of a catalytic alpha subunit, an auxiliary non-catalytic beta subunit and an additional regulatory subunit. Interacts with isoform 2 of BSG.

The protein localises to the cell membrane. In terms of biological role, this is the non-catalytic component of the active enzyme, which catalyzes the hydrolysis of ATP coupled with the exchange of Na(+) and K(+) ions across the plasma membrane. The exact function of the beta-2 subunit is not known. Mediates cell adhesion of neurons and astrocytes, and promotes neurite outgrowth. The protein is Sodium/potassium-transporting ATPase subunit beta-2 (ATP1B2) of Homo sapiens (Human).